Here is a 132-residue protein sequence, read N- to C-terminus: MSTKFVEVGELKEGSYVVIDGEPCRVVEIEKSKTGKHGSAKARIVAVGMFDGGKRTLSLPVDAQIEVPIIEKFTAQILSISGDIIQLMDMRDYKTIEVPMKYVEDEAKGRLAPGSEVEVWQILDRYKIVRVK.

K36 bears the Hypusine mark.

It belongs to the eIF-5A family.

The protein localises to the cytoplasm. Its function is as follows. Functions by promoting the formation of the first peptide bond. In Pyrobaculum arsenaticum (strain DSM 13514 / JCM 11321 / PZ6), this protein is Translation initiation factor 5A (eIF5A).